Consider the following 848-residue polypeptide: MYLYIETLKQRLDAINQLRVDRALAAMGPAFQQVYSLLPTLLHYHHPLMPGYLDGNVPKGICLYTPDETQRHYLNELELYRGMSVQDPPKGELPITGVYTMGSTSSVGQSCSSDLDIWVCHQSWLDSEERQLLQRKCSLLENWAASLGVEVSFFLIDENRFRHNESGSLGGEDCGSTQHILLLDEFYRTAVRLAGKRILWNMVPCDEEEHYDDYVMTLYAQGVLTPNEWLDLGGLSSLSAEEYFGASLWQLYKSIDSPYKAVLKTLLLEAYSWEYPNPRLLAKDIKQRLHDGEIVSFGLDPYCMMLERVTEYLTAIEDFTRLDLVRRCFYLKVCEKLSRERACVGWRRAVLSQLVSEWGWDEARLAMLDNRANWKIDQVREAHNELLDAMMQSYRNLIRFARRNNLSVSASPQDIGVLTRKLYAAFEALPGKVTLVNPQISPDLSEPNLTFIYVPPGRANRSGWYLYNRAPNIESIISHQPLEYNRYLNKLVAWAWFNGLLTSRTRLYIKGNGIVDLPKLQEMVADVSHHFPLRLPAPTPKALYSPCEIRHLAIIVNLEYDPTAAFRNQVVHFDFRKLDVFSFGENQNCLVGSVDLLYRNSWNEVRTLHFNGEQSMIEALKTILGKMHQDAAPPDSVEVFCYSQHLRGLIRTRVQQLVSECIELRLSSTRQETGRFKALRVSGQTWGLFFERLNVSVQKLENAIEFYGAISHNKLHGLSVQVETNHVKLPAVVDGFASEGIIQFFFEETQDENGFNIYILDESNRVEVYHHCEGSKEELVRDVSRFYSSSHDRFTYGSSFINFNLPQFYQIVKVDGREQVIPFRTKSIGNMPPANQDHDTPLLQQYFS.

Residues 1–535 (MYLYIETLKQ…DVSHHFPLRL (535 aa)) are catalytic. The tract at residues 541-848 (KALYSPCEIR…DTPLLQQYFS (308 aa)) is regulatory. At His-609 the chain carries Phosphohistidine; by CRR.

It belongs to the adenylyl cyclase class-1 family.

It is found in the cytoplasm. The catalysed reaction is ATP = 3',5'-cyclic AMP + diphosphate. The regulatory domain is involved in the regulation of cyclase activity by the carbon source. Activated by the PTS system, glucose-specific IIA component (CRR). Catalyzes the formation of the second messenger cAMP from ATP. Its transcript is probably degraded by endoribonuclease LS (rnlA), decreasing cAMP levels and the negative regulator Crp-cAMP, which then induces its own transcription again. The polypeptide is Adenylate cyclase (cyaA) (Escherichia coli (strain K12)).